Here is a 250-residue protein sequence, read N- to C-terminus: MSDLSGKTIIVTGGGSGIGRATVELLVASGANVAVADINDEAGEAVVAASGGKAAYFRCDIAQEEDVKALVAQTLAAFGGLDGAFNNAAIPQAGLPLAEVSLERFRQSMDINVTGTFLCMKYQILAMIERGTKGSIVNTASAAGVVGVPMHGEYVGAKHAVVGLTRVAAADYGKHGIRVNALVPGAVRTPMLQRAMDNDAGLEPYLNSIHPIGRFSEPHEQAQAAVWLLSDAASFVTGSCLAADGGFTAI.

9-34 is a binding site for NAD(+); that stretch reads IIVTGGGSGIGRATVELLVASGANVA. Ser141 is a binding site for substrate. The active-site Proton acceptor is the Tyr154.

This sequence belongs to the short-chain dehydrogenases/reductases (SDR) family.

The catalysed reaction is 2,5-dichlorocyclohexa-2,5-dien-1,4-diol + NAD(+) = 2,5-dichlorohydroquinone + NADH + H(+). It participates in xenobiotic degradation; gamma-hexachlorocyclohexane degradation. Its function is as follows. Catalyzes the dehydrogenation of 2,5-dichloro-2,5-cyclohexadiene-1,4-diol (2,5-DDOL) to 2,5-dichlorohydroquinone (2,5-DCHQ), a step in the degradation of gamma-hexachlorocyclohexane (gamma-HCH or lindane). Has an essential role in this assimilation pathway that allows S.japonicum UT26 to grow on gamma-HCH as the sole source of carbon and energy. The sequence is that of 2,5-dichloro-2,5-cyclohexadiene-1,4-diol dehydrogenase from Sphingobium indicum (strain DSM 16413 / CCM 7287 / MTCC 6362 / UT26 / NBRC 101211 / UT26S) (Sphingobium japonicum).